A 98-amino-acid chain; its full sequence is Integration host factor subunit beta (98 aa).

This sequence belongs to the bacterial histone-like protein family. In terms of assembly, heterodimer of an alpha and a beta chain.

In terms of biological role, this protein is one of the two subunits of integration host factor, a specific DNA-binding protein that functions in genetic recombination as well as in transcriptional and translational control. The protein is Integration host factor subunit beta of Hahella chejuensis (strain KCTC 2396).